The primary structure comprises 298 residues: Inosose dehydratase (298 aa).

The protein belongs to the IolE/MocC family. Requires glutathione as cofactor. Co(2+) serves as cofactor. It depends on Mn(2+) as a cofactor.

It catalyses the reaction scyllo-inosose = 3D-3,5/4-trihydroxycyclohexane-1,2-dione + H2O. Its pathway is polyol metabolism; myo-inositol degradation into acetyl-CoA; acetyl-CoA from myo-inositol: step 2/7. Catalyzes the dehydration of inosose (2-keto-myo-inositol, 2KMI or 2,4,6/3,5-pentahydroxycyclohexanone) to 3D-(3,5/4)-trihydroxycyclohexane-1,2-dione (D-2,3-diketo-4-deoxy-epi-inositol). This Bacillus cereus (strain AH820) protein is Inosose dehydratase.